The primary structure comprises 113 residues: DNA-binding protein PTO0204 (113 aa).

It belongs to the PDCD5 family.

This is DNA-binding protein PTO0204 from Picrophilus torridus (strain ATCC 700027 / DSM 9790 / JCM 10055 / NBRC 100828 / KAW 2/3).